The following is a 398-amino-acid chain: MGIKHCCYILYFTLALVTLLQPVRSAEDVEEFLPSANETRRSLKACEAHNIIDKCWRCKADWANNRQALADCAQGFAKGTYGGKHGDVYTVTSDKDDDVANPKEGTLRFAAAQNRPLWIIFKRNMVIHLNQELVVNSDKTIDGRGVKVNIVNAGLTLMNVKNIIIHNINIHDIKVCPGGMIKSNDGPPILRQQSDGDAINVAGSSQIWIDHCSLSKASDGLLDITLGSSHVTVSNCKFTQHQFVLLLGADDTHYQDKGMLATVAFNMFTDHVDQRMPRCRFGFFQVVNNNYDRWGTYAIGGSSAPTILSQGNRFFAPDDIIKKNVLARTGTGNAESMSWNWRTDRDLLENGAIFLPSGSDPVLTPEQKAGMIPAEPGEAVLRLTSSAGVLSCHQGAPC.

A signal peptide spans 1–25 (MGIKHCCYILYFTLALVTLLQPVRS). Asparagine 37 carries an N-linked (GlcNAc...) asparagine glycan. A disulfide bond links cysteine 55 and cysteine 72. Ca(2+) contacts are provided by aspartate 195, aspartate 219, and aspartate 223. Residue arginine 275 is part of the active site.

It belongs to the polysaccharide lyase 1 family. Amb a subfamily. As to quaternary structure, monomer. Requires Ca(2+) as cofactor. Post-translationally, the N-terminus is blocked. Pollen and flowers.

The enzyme catalyses Eliminative cleavage of (1-&gt;4)-alpha-D-galacturonan to give oligosaccharides with 4-deoxy-alpha-D-galact-4-enuronosyl groups at their non-reducing ends.. The protein operates within glycan metabolism; pectin degradation; 2-dehydro-3-deoxy-D-gluconate from pectin: step 2/5. In terms of biological role, has pectate lyase activity. This Ambrosia artemisiifolia (Common ragweed) protein is Pectate lyase 1.